Here is a 417-residue protein sequence, read N- to C-terminus: Sterile alpha motif domain-containing protein 14 (417 aa).

The tract at residues 36 to 302 (QLLAKGRRHR…GGPRQETKCS (267 aa)) is disordered. Over residues 40 to 49 (KGRRHRPSRS) the composition is skewed to basic residues. 2 positions are modified to phosphoserine: Ser-84 and Ser-108. Residues 138–153 (SGSPPRSAPSSDSSPS) are compositionally biased toward low complexity. Over residues 159–173 (PRAEPHSEDDSRDAS) the composition is skewed to basic and acidic residues. A phosphoserine mark is found at Ser-173 and Ser-179. Low complexity-rich tracts occupy residues 244-260 (SGKG…PTCS) and 276-289 (STLS…SSSP). At Ser-279 the chain carries Phosphoserine. Position 283 is a phosphothreonine (Thr-283). An SAM domain is found at 326 to 389 (WTSQQVGQWL…KRKLKELAAA (64 aa)). A coiled-coil region spans residues 375–416 (DRALVKRKLKELAAAAEKERKAQEKTAKQREKLRRRENDAKK). Residues 390-417 (AEKERKAQEKTAKQREKLRRRENDAKKS) form a disordered region.

The polypeptide is Sterile alpha motif domain-containing protein 14 (Samd14) (Mus musculus (Mouse)).